We begin with the raw amino-acid sequence, 197 residues long: Translation initiation factor IF-3 (197 aa).

It belongs to the IF-3 family. Monomer.

The protein localises to the cytoplasm. Functionally, IF-3 binds to the 30S ribosomal subunit and shifts the equilibrium between 70S ribosomes and their 50S and 30S subunits in favor of the free subunits, thus enhancing the availability of 30S subunits on which protein synthesis initiation begins. The protein is Translation initiation factor IF-3 of Prosthecochloris aestuarii (strain DSM 271 / SK 413).